The following is a 217-amino-acid chain: Uracil-DNA glycosylase (217 aa).

D62 functions as the Proton acceptor in the catalytic mechanism.

Belongs to the uracil-DNA glycosylase (UDG) superfamily. UNG family.

The protein localises to the cytoplasm. The catalysed reaction is Hydrolyzes single-stranded DNA or mismatched double-stranded DNA and polynucleotides, releasing free uracil.. In terms of biological role, excises uracil residues from the DNA which can arise as a result of misincorporation of dUMP residues by DNA polymerase or due to deamination of cytosine. This is Uracil-DNA glycosylase from Streptococcus pneumoniae (strain P1031).